The chain runs to 589 residues: ATP-dependent lipid A-core flippase (589 aa).

6 consecutive transmembrane segments (helical) span residues 33-53 (VLAIVCMVLAAAGQAAFAWII), 70-90 (LWVPATLVGIFLFHGVTTFAS), 148-168 (VVVLVRDTFTVIFLLAYMTYL), 170-190 (GWLVMIVFGLGPLVAVVVTAA), 262-282 (LGAVIALAIILYLATMDVILE), and 283-303 (TISPGGMISFIAAMLLMLPPL). One can recognise an ABC transmembrane type-1 domain in the interval 33–315 (VLAIVCMVLA…VIGVNAEIQK (283 aa)). Positions 347-583 (IEFDRVAFRY…NGHYASLHRV (237 aa)) constitute an ABC transporter domain. 381 to 388 (GRSGSGKT) lines the ATP pocket.

The protein belongs to the ABC transporter superfamily. Lipid exporter (TC 3.A.1.106) family. Homodimer.

The protein localises to the cell inner membrane. The enzyme catalyses ATP + H2O + lipid A-core oligosaccharideSide 1 = ADP + phosphate + lipid A-core oligosaccharideSide 2.. In terms of biological role, involved in lipopolysaccharide (LPS) biosynthesis. Translocates lipid A-core from the inner to the outer leaflet of the inner membrane. Transmembrane domains (TMD) form a pore in the inner membrane and the ATP-binding domain (NBD) is responsible for energy generation. The sequence is that of ATP-dependent lipid A-core flippase from Alkalilimnicola ehrlichii (strain ATCC BAA-1101 / DSM 17681 / MLHE-1).